The sequence spans 194 residues: MSWHTGSNQDNKLFPKGKLSGSYAPLDIAFENSPAMNEFENRLCHNNPIISERSMSPAVSASYSNPEATSCGCMQTQTQPQHQTLSQHLPQTHHTDAHDQQKLSGIFYNRTTDAQNQFSETINPPPSYTVHNTDIRIPLNRQQQYPANHLGSELLEGYNNVGTEPCMGFWEILLLIILIAVLVYGIYWLYKSEK.

A compositionally biased stretch (polar residues) spans 77-92 (QTQPQHQTLSQHLPQT). A disordered region spans residues 77–96 (QTQPQHQTLSQHLPQTHHTD). A helical membrane pass occupies residues 169–189 (FWEILLLIILIAVLVYGIYWL).

The protein localises to the host membrane. It is found in the virion. This is an uncharacterized protein from Acanthamoeba polyphaga (Amoeba).